The chain runs to 492 residues: Serine/threonine protein phosphatase 2A 57 kDa regulatory subunit B' theta isoform (492 aa).

Positions 1–63 (MWKQILSKLP…GFKEGNLKGN (63 aa)) are disordered. Residues 16–39 (KNHSSSSSSTSKSSDNGASKSGNS) show a composition bias toward low complexity. Residues 490 to 492 (SSL) carry the Microbody targeting signal motif.

It belongs to the phosphatase 2A regulatory subunit B56 family. As to quaternary structure, PP2A consists of a common heteromeric enzyme, composed of a catalytic subunit (subunits C), a constant regulatory subunit (subunit A), and a variety of regulatory subunits such as subunits B (the R2/B/PR55/B55, R3/B''/PR72/PR130/PR59 and R5/B'/B56 families). Interacts with BZR1. Interacts with PP2A2, PP2A5 and PP2AA2. In terms of tissue distribution, highly expressed in dry seeds. Expressed in roots, cotyledons, rosette leaves and flowers.

The protein localises to the cytoplasm. Its subcellular location is the cytosol. It localises to the peroxisome. Functionally, the B regulatory subunit may modulate substrate selectivity and catalytic activity, and may also direct the localization of the catalytic enzyme to a particular subcellular compartment. Associates with the serine/threonine-protein phosphatase PP2A catalytic subunit C and regulatory subunit A to positively regulates beta-oxidation of fatty acids and protoauxins in peroxisomes by dephosphorylating peroxisomal beta-oxidation-related proteins. Required for the formation of the PP2A holoenzyme that negatively regulates brassinosteroid signaling by dephosphorylating and inactivating BRI1 in the cytoplasm. This is Serine/threonine protein phosphatase 2A 57 kDa regulatory subunit B' theta isoform (B'THETA) from Arabidopsis thaliana (Mouse-ear cress).